We begin with the raw amino-acid sequence, 537 residues long: ATP-dependent 6-phosphofructokinase 5, chloroplastic (537 aa).

The transit peptide at 1–52 directs the protein to the chloroplast; it reads MDALSQAISSGISVPYKNNSSSLVPSHGLTSLILRKSRSPVNPSSRSRVSVR. The disordered stretch occupies residues 35 to 64; sequence RKSRSPVNPSSRSRVSVRASEIQHSKTSAS. Positions 39–54 are enriched in low complexity; sequence SPVNPSSRSRVSVRAS. Ser-147 bears the Phosphoserine mark. ATP contacts are provided by residues Gly-189, 253–254, and 278–281; these read RG and GNGT. A Mg(2+)-binding site is contributed by Asn-279. Residues 307–309, 352–354, Glu-408, and 460–463 each bind substrate; these read TID, MGR, and YMIR. Asp-309 acts as the Proton acceptor in catalysis.

Belongs to the phosphofructokinase type A (PFKA) family. PPi-dependent PFK group II subfamily. Atypical ATP-dependent clade 'X' sub-subfamily. In terms of assembly, homotetramer. Mg(2+) serves as cofactor. In terms of tissue distribution, expressed in roots, leaves, stems and flowers.

The protein resides in the plastid. It is found in the chloroplast. It carries out the reaction beta-D-fructose 6-phosphate + ATP = beta-D-fructose 1,6-bisphosphate + ADP + H(+). Its pathway is carbohydrate degradation; glycolysis; D-glyceraldehyde 3-phosphate and glycerone phosphate from D-glucose: step 3/4. Its activity is regulated as follows. Allosterically activated by AMP. Functionally, catalyzes the phosphorylation of D-fructose 6-phosphate to fructose 1,6-bisphosphate by ATP, the first committing step of glycolysis. This is ATP-dependent 6-phosphofructokinase 5, chloroplastic from Arabidopsis thaliana (Mouse-ear cress).